The chain runs to 72 residues: UPF0270 protein YheU (72 aa).

It belongs to the UPF0270 family.

The sequence is that of UPF0270 protein YheU from Escherichia coli (strain ATCC 8739 / DSM 1576 / NBRC 3972 / NCIMB 8545 / WDCM 00012 / Crooks).